A 120-amino-acid chain; its full sequence is Putative non-specific lipid-transfer protein 14 (120 aa).

Residues M1 to A22 form the signal peptide. Cystine bridges form between C30–C80, C40–C57, C58–C102, and C78–C116.

It belongs to the plant LTP family.

Its function is as follows. Plant non-specific lipid-transfer proteins transfer phospholipids as well as galactolipids across membranes. May play a role in wax or cutin deposition in the cell walls of expanding epidermal cells and certain secretory tissues. In Arabidopsis thaliana (Mouse-ear cress), this protein is Putative non-specific lipid-transfer protein 14 (LTP14).